A 182-amino-acid chain; its full sequence is Type-1 fimbrial protein, A chain (182 aa).

The N-terminal stretch at 1–23 (MKIKTLAIVVLSALSLSSTAALA) is a signal peptide. A disulfide bridge links Cys-44 with Cys-84.

This sequence belongs to the fimbrial protein family.

It is found in the fimbrium. Fimbriae (also called pili), polar filaments radiating from the surface of the bacterium to a length of 0.5-1.5 micrometers and numbering 100-300 per cell, enable bacteria to colonize the epithelium of specific host organs. This is Type-1 fimbrial protein, A chain (fimA) from Escherichia coli (strain K12).